The sequence spans 259 residues: tRNA pseudouridine synthase A (259 aa).

Asp-50 acts as the Nucleophile in catalysis. Tyr-101 contacts substrate.

Belongs to the tRNA pseudouridine synthase TruA family.

The catalysed reaction is uridine(38/39/40) in tRNA = pseudouridine(38/39/40) in tRNA. Functionally, formation of pseudouridine at positions 38, 39 and 40 in the anticodon stem and loop of transfer RNAs. This Methanocaldococcus jannaschii (strain ATCC 43067 / DSM 2661 / JAL-1 / JCM 10045 / NBRC 100440) (Methanococcus jannaschii) protein is tRNA pseudouridine synthase A.